We begin with the raw amino-acid sequence, 867 residues long: Leucine--tRNA ligase (867 aa).

A 'HIGH' region motif is present at residues 57 to 67 (PYPSGTLHMGH). The segment at 308–327 (SQDERTSDDQPKRGVPTGAV) is disordered. The span at 309–319 (QDERTSDDQPK) shows a compositional bias: basic and acidic residues. The 'KMSKS' region motif lies at 631-635 (KMSKS). K634 lines the ATP pocket.

It belongs to the class-I aminoacyl-tRNA synthetase family.

The protein resides in the cytoplasm. It carries out the reaction tRNA(Leu) + L-leucine + ATP = L-leucyl-tRNA(Leu) + AMP + diphosphate. This is Leucine--tRNA ligase from Synechococcus sp. (strain CC9311).